The primary structure comprises 355 residues: Protein RecA (355 aa).

Residue 72 to 79 (GPESSGKT) coordinates ATP.

The protein belongs to the RecA family.

Its subcellular location is the cytoplasm. In terms of biological role, can catalyze the hydrolysis of ATP in the presence of single-stranded DNA, the ATP-dependent uptake of single-stranded DNA by duplex DNA, and the ATP-dependent hybridization of homologous single-stranded DNAs. It interacts with LexA causing its activation and leading to its autocatalytic cleavage. The polypeptide is Protein RecA (Wolbachia pipientis subsp. Culex pipiens (strain wPip)).